The primary structure comprises 367 residues: Chorismate synthase (367 aa).

NADP(+) contacts are provided by Arg48 and Arg54. Residues 125–127 (RSS), 238–239 (NA), Gly278, 293–297 (KPTSS), and Arg319 each bind FMN.

Belongs to the chorismate synthase family. In terms of assembly, homotetramer. The cofactor is FMNH2.

It carries out the reaction 5-O-(1-carboxyvinyl)-3-phosphoshikimate = chorismate + phosphate. It participates in metabolic intermediate biosynthesis; chorismate biosynthesis; chorismate from D-erythrose 4-phosphate and phosphoenolpyruvate: step 7/7. Functionally, catalyzes the anti-1,4-elimination of the C-3 phosphate and the C-6 proR hydrogen from 5-enolpyruvylshikimate-3-phosphate (EPSP) to yield chorismate, which is the branch point compound that serves as the starting substrate for the three terminal pathways of aromatic amino acid biosynthesis. This reaction introduces a second double bond into the aromatic ring system. The sequence is that of Chorismate synthase from Stenotrophomonas maltophilia (strain K279a).